The following is a 59-amino-acid chain: MAKLQITLTRSVIGRPETQRKTVEALGLKKTNSSVVVEDNPAIRGQINKVRHLLTVEEK.

Belongs to the universal ribosomal protein uL30 family. In terms of assembly, part of the 50S ribosomal subunit.

This is Large ribosomal subunit protein uL30 from Staphylococcus haemolyticus (strain JCSC1435).